Here is a 497-residue protein sequence, read N- to C-terminus: Apolipoprotein N-acyltransferase (497 aa).

6 helical membrane-spanning segments follow: residues Phe-21 to Trp-41, Ala-51 to Val-71, Val-85 to Ile-105, Gly-119 to Phe-139, Phe-157 to Leu-177, and Phe-189 to Thr-209. The 241-residue stretch at Leu-221–Gly-461 folds into the CN hydrolase domain. The active-site Proton acceptor is Glu-259. Residue Lys-319 is part of the active site. The Nucleophile role is filled by Cys-371. A helical transmembrane segment spans residues Ser-472 to Gly-492.

The protein belongs to the CN hydrolase family. Apolipoprotein N-acyltransferase subfamily.

The protein resides in the cell inner membrane. It catalyses the reaction N-terminal S-1,2-diacyl-sn-glyceryl-L-cysteinyl-[lipoprotein] + a glycerophospholipid = N-acyl-S-1,2-diacyl-sn-glyceryl-L-cysteinyl-[lipoprotein] + a 2-acyl-sn-glycero-3-phospholipid + H(+). Its pathway is protein modification; lipoprotein biosynthesis (N-acyl transfer). Functionally, catalyzes the phospholipid dependent N-acylation of the N-terminal cysteine of apolipoprotein, the last step in lipoprotein maturation. In Nitrosomonas europaea (strain ATCC 19718 / CIP 103999 / KCTC 2705 / NBRC 14298), this protein is Apolipoprotein N-acyltransferase.